A 271-amino-acid polypeptide reads, in one-letter code: Glutamate 5-kinase (271 aa).

Lysine 14 lines the ATP pocket. Residues serine 54, aspartate 141, and asparagine 157 each contribute to the substrate site. ATP-binding positions include 177-178 and 219-225; these read SD and TGGMSSK.

It belongs to the glutamate 5-kinase family.

The protein localises to the cytoplasm. It catalyses the reaction L-glutamate + ATP = L-glutamyl 5-phosphate + ADP. It participates in amino-acid biosynthesis; L-proline biosynthesis; L-glutamate 5-semialdehyde from L-glutamate: step 1/2. Its function is as follows. Catalyzes the transfer of a phosphate group to glutamate to form L-glutamate 5-phosphate. The polypeptide is Glutamate 5-kinase (Enterococcus faecalis (strain ATCC 700802 / V583)).